A 421-amino-acid chain; its full sequence is Glucan 1,3-beta-glucosidase (421 aa).

An N-terminal signal peptide occupies residues 1-15; that stretch reads MKLTKLVALAGAALA. Catalysis depends on Glu-213, which acts as the Proton donor. Intrachain disulfides connect Cys-296–Cys-419 and Cys-321–Cys-347. The active-site Nucleophile is the Glu-313.

Belongs to the glycosyl hydrolase 5 (cellulase A) family.

Its subcellular location is the secreted. The enzyme catalyses Successive hydrolysis of beta-D-glucose units from the non-reducing ends of (1-&gt;3)-beta-D-glucans, releasing alpha-glucose.. In Yarrowia lipolytica (strain CLIB 122 / E 150) (Yeast), this protein is Glucan 1,3-beta-glucosidase (EXG1).